Consider the following 346-residue polypeptide: fMet-Leu-Phe receptor (346 aa).

Residues asparagine 1 and asparagine 7 are each glycosylated (N-linked (GlcNAc...) asparagine). Over 1 to 24 (NSSLPTNISGGTPAVSAGYLFLDI) the chain is Extracellular. A helical transmembrane segment spans residues 25 to 47 (VTYLVFAVTFVLGVLGNGLVIWV). Topologically, residues 48–58 (AGFRMTHTVTT) are cytoplasmic. A helical transmembrane segment spans residues 59–80 (ISYLNLAVADFCFTSTLPFFMV). Over 81 to 97 (KKAMGGHWPFGWFLCKF) the chain is Extracellular. Cysteine 95 and cysteine 173 are disulfide-bonded. Residues 98–118 (IFTIVDINLFGSVFLIALIAL) form a helical membrane-spanning segment. Over 119–137 (DRCVCVLHPVWTQNHRTVS) the chain is Cytoplasmic. Residues 138-159 (LAKKVIIGPWVMALLLTLPVII) traverse the membrane as a helical segment. The Extracellular portion of the chain corresponds to 160-202 (RVTTVPGKMGTVACTFNFSPWTNDPKERIKVAVAMLTVRGIIR). The chain crosses the membrane as a helical span at residues 203–223 (FIIGFSAPMSIVAVSYGLIAT). Topologically, residues 224 to 239 (KIDKQGLIKSSRTLRV) are cytoplasmic. Residues 240 to 263 (LSFVAAAFFLSWSPYQVVALIATV) traverse the membrane as a helical segment. Residues 264 to 282 (RIRELLQGMYKEIGIAVDV) lie on the Extracellular side of the membrane. A helical transmembrane segment spans residues 283–302 (TSALAFFNSCLNPMLYVFMG). The Cytoplasmic segment spans residues 303–346 (QDFRERLIHALPASLERALTEDSTQTSDTATNSTLPSAEVALQA). Residues 322 to 346 (TEDSTQTSDTATNSTLPSAEVALQA) form a disordered region. Positions 323-338 (EDSTQTSDTATNSTLP) are enriched in polar residues.

It belongs to the G-protein coupled receptor 1 family. Post-translationally, phosphorylated; which is necessary for desensitization.

Its subcellular location is the cell membrane. Functionally, high affinity receptor for N-formyl-methionyl peptides (fMLP), which are powerful neutrophil chemotactic factors. Binding of fMLP to the receptor stimulates intracellular calcium mobilization and superoxide anion release. This response is mediated via a G-protein that activates a phosphatidylinositol-calcium second messenger system. Receptor for TAFA4, mediates its effects on chemoattracting macrophages, promoting phagocytosis and increasing ROS release. Receptor for cathepsin CTSG, leading to increased phagocyte chemotaxis. The polypeptide is fMet-Leu-Phe receptor (FPR1) (Gorilla gorilla gorilla (Western lowland gorilla)).